The chain runs to 782 residues: Chondroitin proteoglycan 4 (782 aa).

An N-terminal signal peptide occupies residues 1–18 (MRLVYSLIFLLFIPFSHP). N-linked (GlcNAc...) asparagine glycans are attached at residues asparagine 76, asparagine 208, asparagine 462, asparagine 468, asparagine 474, and asparagine 503. A disordered region spans residues 513–726 (ISEKSTEESS…EDQGSGNYKK (214 aa)). Composition is skewed to low complexity over residues 520–532 (ESSG…SGDG), 548–566 (SGSS…SSGE), 573–612 (SSGS…SSDT), 662–672 (FGESSGSSGES), and 688–722 (SGSS…QGSG). The N-linked (GlcNAc...) asparagine glycan is linked to asparagine 559. Serine 691 is a glycosylation site (O-linked (Xyl...) (chondroitin sulfate) serine). The N-linked (GlcNAc...) asparagine glycan is linked to asparagine 699. Serine 701, serine 704, serine 708, serine 714, and serine 721 each carry an O-linked (Xyl...) (chondroitin sulfate) serine glycan. N-linked (GlcNAc...) asparagine glycosylation occurs at asparagine 743.

The chain is Chondroitin proteoglycan 4 from Caenorhabditis elegans.